An 802-amino-acid chain; its full sequence is Leucine--tRNA ligase (802 aa).

The 'HIGH' region motif lies at 40 to 51 (PYPSGAGLHVGH). Positions 576–580 (KMSKS) match the 'KMSKS' region motif. Lys-579 provides a ligand contact to ATP.

The protein belongs to the class-I aminoacyl-tRNA synthetase family.

It localises to the cytoplasm. The catalysed reaction is tRNA(Leu) + L-leucine + ATP = L-leucyl-tRNA(Leu) + AMP + diphosphate. The sequence is that of Leucine--tRNA ligase from Bacillus anthracis (strain A0248).